Reading from the N-terminus, the 631-residue chain is Protein FRIABLE 1 (631 aa).

Residues 1–13 (MSVGVPVNPSSSS) are compositionally biased toward low complexity. Residues 1–36 (MSVGVPVNPSSSSQLPAAPTTTTRRRVADSQEDHSH) form a disordered region. The Cytoplasmic segment spans residues 1-120 (MSVGVPVNPS…NMRSTTNLGR (120 aa)). A compositionally biased stretch (basic and acidic residues) spans 26–36 (RVADSQEDHSH). Residues 121-141 (FILTLLSILVVTFFLIVALSG) traverse the membrane as a helical; Signal-anchor for type II membrane protein segment. The Lumenal portion of the chain corresponds to 142–631 (GVGRRRKHVE…RPSLRAQSLR (490 aa)). N-linked (GlcNAc...) asparagine glycosylation is found at Asn-246, Asn-329, and Asn-364. 384 to 386 (HLR) serves as a coordination point for substrate. N-linked (GlcNAc...) asparagine glycosylation is found at Asn-398 and Asn-425.

It belongs to the glycosyltransferase GT106 family. In terms of tissue distribution, ubiquitous. Strong expression in young seedlings, particularly at the junction between hypocotyl and root, in emerging cotyledons, and in parts of the roots. Also detected in the inflorescence (sepals, petals, mature pollen and siliques) and rosette leaves.

It localises to the golgi apparatus membrane. It participates in glycan metabolism. Functionally, glycosyltransferase required for normal cell adhesion and cell wall integrity. The sequence is that of Protein FRIABLE 1 from Arabidopsis thaliana (Mouse-ear cress).